Here is a 537-residue protein sequence, read N- to C-terminus: Protein disulfide isomerase-like 1-5 (537 aa).

Positions 1-29 (MSLIPKPISKVSTFTFILLILLSFTIIIA) are cleaved as a signal peptide. Residues 58-184 (LQEDRPEQQS…IVIWVQKKTG (127 aa)) enclose the Thioredoxin 1 domain. C106 functions as the Nucleophile in the catalytic mechanism. N-linked (GlcNAc...) asparagine glycosylation is found at N160, N364, and N416. The 147-residue stretch at 380–526 (LLESDPSPNS…IAVFINEELL (147 aa)) folds into the Thioredoxin 2 domain. Residues C447 and C450 each act as nucleophile in the active site. The cysteines at positions 447 and 450 are disulfide-linked. An N-linked (GlcNAc...) asparagine glycan is attached at N530. The short motif at 534–537 (KDEL) is the Prevents secretion from ER element.

This sequence belongs to the protein disulfide isomerase family. Widely expressed.

It is found in the endoplasmic reticulum lumen. It catalyses the reaction Catalyzes the rearrangement of -S-S- bonds in proteins.. Its function is as follows. Acts as a protein-folding catalyst that interacts with nascent polypeptides to catalyze the formation, isomerization, and reduction or oxidation of disulfide bonds. In Arabidopsis thaliana (Mouse-ear cress), this protein is Protein disulfide isomerase-like 1-5 (PDIL1-5).